A 477-amino-acid polypeptide reads, in one-letter code: Glycogen synthase (477 aa).

Lys15 lines the ADP-alpha-D-glucose pocket.

Belongs to the glycosyltransferase 1 family. Bacterial/plant glycogen synthase subfamily.

It carries out the reaction [(1-&gt;4)-alpha-D-glucosyl](n) + ADP-alpha-D-glucose = [(1-&gt;4)-alpha-D-glucosyl](n+1) + ADP + H(+). It functions in the pathway glycan biosynthesis; glycogen biosynthesis. Its function is as follows. Synthesizes alpha-1,4-glucan chains using ADP-glucose. This Edwardsiella ictaluri (strain 93-146) protein is Glycogen synthase.